Consider the following 425-residue polypeptide: MKILITNGRVLDPAHGIDEKFDVLIEDNRIAQVGTDIQTADAEKIDAAGCLVVPGLIDIHVHLRDPGFEYKEDIESGTRAAAAGGFTAVACMPNTSPVNDNKATTQYILHKAAQAGHAKVYPVGAITKGLKGESLAELGDMKQAGCVAVTDDGHPVSHGEIMRRALEYARSFDLPIVSHSEDLSLVGDGVMNDGFVATELGLRGIPWVAEVSAVARDVMLAEYTNARLHVAHVSTRGAVEIIRAAKARGARVTAETAPHYFTLTEDAVRGYDTHAKMNPPLRTSDDLEAIREGLADGTLSVIATDHAPHHPDEKNVEFNLALNGIIGLETALPLTLRLVEEGALSLSDAIACLTSGPAAALSLPGGTLEVGRPADVTIIDPEIKWTLDPQAGQSRSRNTPFGDWKLKGRAICTIVDGRITYRLSD.

His60 and His62 together coordinate Zn(2+). Substrate-binding positions include 62–64 and Asn94; that span reads HLR. Positions 152, 179, and 232 each coordinate Zn(2+). Asn278 contacts substrate. Asp305 is a Zn(2+) binding site. The active site involves Asp305. His309 serves as a coordination point for substrate.

It belongs to the metallo-dependent hydrolases superfamily. DHOase family. Class I DHOase subfamily. It depends on Zn(2+) as a cofactor.

The catalysed reaction is (S)-dihydroorotate + H2O = N-carbamoyl-L-aspartate + H(+). It functions in the pathway pyrimidine metabolism; UMP biosynthesis via de novo pathway; (S)-dihydroorotate from bicarbonate: step 3/3. In terms of biological role, catalyzes the reversible cyclization of carbamoyl aspartate to dihydroorotate. This is Dihydroorotase from Syntrophotalea carbinolica (strain DSM 2380 / NBRC 103641 / GraBd1) (Pelobacter carbinolicus).